A 120-amino-acid polypeptide reads, in one-letter code: NAD(P)H-quinone oxidoreductase subunit 3, chloroplastic (120 aa).

3 helical membrane-spanning segments follow: residues 9 to 29 (IFWAFLIISSVIPILAFLFSG), 64 to 84 (MFALVFVVFDVETVFLYPWAM), and 88 to 108 (ILGVSVFIEALIFVLILIVGL).

The protein belongs to the complex I subunit 3 family. As to quaternary structure, NDH is composed of at least 16 different subunits, 5 of which are encoded in the nucleus.

It is found in the plastid. Its subcellular location is the chloroplast thylakoid membrane. The enzyme catalyses a plastoquinone + NADH + (n+1) H(+)(in) = a plastoquinol + NAD(+) + n H(+)(out). The catalysed reaction is a plastoquinone + NADPH + (n+1) H(+)(in) = a plastoquinol + NADP(+) + n H(+)(out). In terms of biological role, NDH shuttles electrons from NAD(P)H:plastoquinone, via FMN and iron-sulfur (Fe-S) centers, to quinones in the photosynthetic chain and possibly in a chloroplast respiratory chain. The immediate electron acceptor for the enzyme in this species is believed to be plastoquinone. Couples the redox reaction to proton translocation, and thus conserves the redox energy in a proton gradient. This Spinacia oleracea (Spinach) protein is NAD(P)H-quinone oxidoreductase subunit 3, chloroplastic.